A 41-amino-acid polypeptide reads, in one-letter code: Cytochrome b559 subunit beta (41 aa).

A helical transmembrane segment spans residues 16–32 (WLAVHALAVPTVFFLGS). His20 contributes to the heme binding site.

The protein belongs to the PsbE/PsbF family. As to quaternary structure, heterodimer of an alpha subunit and a beta subunit. PSII is composed of 1 copy each of membrane proteins PsbA, PsbB, PsbC, PsbD, PsbE, PsbF, PsbH, PsbI, PsbJ, PsbK, PsbL, PsbM, PsbT, PsbX, PsbY, PsbZ, Psb30/Ycf12, at least 3 peripheral proteins of the oxygen-evolving complex and a large number of cofactors. It forms dimeric complexes. The cofactor is heme b.

It is found in the plastid. Its subcellular location is the chloroplast thylakoid membrane. Its function is as follows. This b-type cytochrome is tightly associated with the reaction center of photosystem II (PSII). PSII is a light-driven water:plastoquinone oxidoreductase that uses light energy to abstract electrons from H(2)O, generating O(2) and a proton gradient subsequently used for ATP formation. It consists of a core antenna complex that captures photons, and an electron transfer chain that converts photonic excitation into a charge separation. In Nephroselmis olivacea (Green alga), this protein is Cytochrome b559 subunit beta.